A 624-amino-acid chain; its full sequence is Chromosomal replication initiator protein DnaA (624 aa).

The domain I, interacts with DnaA modulators stretch occupies residues 1–99; the sequence is MADVPADLAA…SAGEPPSPPA (99 aa). Residues 88-284 form a disordered region; it reads DDSAGEPPSP…APGPGEPHAR (197 aa). The segment at 100–283 is domain II; that stretch reads PPMHQSHQSQ…PAPGPGEPHA (184 aa). Residues 102 to 112 are compositionally biased toward low complexity; that stretch reads MHQSHQSQQGH. 2 stretches are compositionally biased toward basic and acidic residues: residues 118–141 and 176–206; these read QRDDAPRGDAYDGYGHRPSDDGMP and GYQDREQPSGEPYRESESYRERENEQYREQA. The span at 250–264 shows a compositional bias: gly residues; sequence PRQGGHGPGRTGGSV. Positions 284 to 500 are domain III, AAA+ region; sequence RLNPKYLFDT…GALIRVTAFA (217 aa). 4 residues coordinate ATP: G328, G330, K331, and T332. The segment at 501–624 is domain IV, binds dsDNA; sequence SLNRQPVDLG…TELTNRIKNG (124 aa).

The protein belongs to the DnaA family. Oligomerizes as a right-handed, spiral filament on DNA at oriC.

It is found in the cytoplasm. Plays an essential role in the initiation and regulation of chromosomal replication. ATP-DnaA binds to the origin of replication (oriC) to initiate formation of the DNA replication initiation complex once per cell cycle. Binds the DnaA box (a 9 base pair repeat at the origin) and separates the double-stranded (ds)DNA. Forms a right-handed helical filament on oriC DNA; dsDNA binds to the exterior of the filament while single-stranded (ss)DNA is stabiized in the filament's interior. The ATP-DnaA-oriC complex binds and stabilizes one strand of the AT-rich DNA unwinding element (DUE), permitting loading of DNA polymerase. After initiation quickly degrades to an ADP-DnaA complex that is not apt for DNA replication. Binds acidic phospholipids. Its function is as follows. The DnaA box consensus is 5'-(T/C)(T/C)(G/AC)TCCACA-3'. This chain is Chromosomal replication initiator protein DnaA, found in Streptomyces anulatus (Streptomyces chrysomallus).